Consider the following 540-residue polypeptide: Putative sel1-like repeat-containing protein R815 (540 aa).

Sel1-like repeat units follow at residues 129-164 (IDAQ…YKEN), 165-200 (LFGL…KHNY), 201-236 (PAVK…NQGY), 237-272 (PLAQ…NNGC), 273-308 (LYAT…SENY), and 309-344 (LLAI…NSTK).

This Acanthamoeba polyphaga (Amoeba) protein is Putative sel1-like repeat-containing protein R815.